The following is a 132-amino-acid chain: Evasin P985 (132 aa).

The signal sequence occupies residues 1 to 24 (MHSTIAYVSLLPLALFVAMHGAST). N45, N69, N74, N103, N111, and N117 each carry an N-linked (GlcNAc...) asparagine glycan. Cystine bridges form between C48–C70, C66–C109, C83–C114, and C104–C123.

It is found in the secreted. Salivary chemokine-binding protein which binds to host chemokine CCL5. The chain is Evasin P985 from Amblyomma parvum (South American tick).